Consider the following 1045-residue polypeptide: Protein madd-4 (1045 aa).

An N-terminal signal peptide occupies residues 1–23; it reads MKCSYTVVFLLFYLLIASFHVDA. TSP type-1 domains lie at 24–71, 236–292, 294–510, 512–572, and 576–635; these read LSWA…KTCE, RCRW…NCVS, SCGR…HPCP, FWLT…NVVA, and TWVT…GSCS. 3 disulfide bridges follow: C35-C65, C39-C70, and C50-C55. Residues N268 and N280 are each glycosylated (N-linked (GlcNAc...) asparagine). In terms of domain architecture, Ig-like C2-type spans 637 to 732; sequence PELLSNRVFE…FTDRLQGNVT (96 aa). The cysteines at positions 674 and 722 are disulfide-linked. Residues N730 and N781 are each glycosylated (N-linked (GlcNAc...) asparagine). The TSP type-1 6 domain maps to 811-873; sequence RWDIGHWSEC…TRPCHREDCP (63 aa). N-linked (GlcNAc...) asparagine glycosylation is found at N899 and N906. Residues 932-990 enclose the TSP type-1 7 domain; the sequence is CKAEWRTSDWGSCSSECGTGGVQLRLLSCVWISSGRPAGRNCEQMRRPHSARACVADEP. The region spanning 1004–1041 is the PLAC domain; the sequence is RDASCQDQSRFCDIIKLFHSCDSLEVRQKCCSTCTFVE.

Interacts with eva-1 (via the SUEL-type lectin domain). Interacts with unc-5. Interacts with unc-40; the interaction is required for the localization of unc-40 to postsynaptic domains. Isoform a forms homodimers and heterodimers with isoform b. Isoform b forms homodimers and heterodimers with isoform a. Isoform b interacts with nlg-1 (via extracellular domain); the interaction is required for nlg-1 localization to postsynaptic domains. Isoform b interacts (via the Ig-like C2-type domain) with nrx-1 (via C-terminus). Isoform a: Expressed in the commissural GABAergic and cholinergic motor neurons in the first larval stage but only in the cholinergic motor neurons in later larval stages and in adult animals. At the L1 larval stage, mainly localized at the nerve ring and at the dorsal cord. Isoform b: Expressed in the commissural GABAergic and cholinergic motor neurons whose cell bodies reside in the ventral nerve cord and which extend axons into the ventral and dorsal nerve cord. Also expressed in the head neurons RIA, RIC, lateral IL1s, lateral IL2s, OLLs, RMEs and SABs, all of which extend axons into the nerve ring. Expressed in the embryogenic blast cells and the corresponding terminally differentiated ventral cord motor neurons and head neurons.

Its subcellular location is the cell projection. The protein localises to the axon. It localises to the secreted. The protein resides in the synapse. It is found in the extracellular space. Its subcellular location is the extracellular matrix. In terms of biological role, component of an extracellular matrix cue that is involved in the guidance of dorsoventral midline migrations and in the specification of postsynaptic domains at neuromuscular junctions (NMJs). Acts as a ligand for the netrin receptor unc-40 and the neuroligin receptor nlg-1. Secreted by the dorsal and ventral nerve cords to attract sensory axons and muscle membrane extensions called muscle arms. In parallel with unc-6 and slt-1, involved in the netrin receptor unc-40 dependent guidance of the AVM and PVM mechanosensory axons along the dorsal-ventral axis. The unc-40 coreceptor eva-1 is enhancing the responsiveness of unc-40 to the madd-4 guidance cue to attract the muscle arm extensions and AVM mechanosensory axons towards the dorsoventral midline. Acts as a synaptic organizer and is required for the specification of inhibitory GABAergic and excitatory cholinergic identities of postsynaptic domains at neuromuscular junctions (NMJs). Required for the recruitment of unc-40 to both cholinergic and GABAergic NMJs. Promotes the clustering of ACh receptors and GABA(A) receptors at postsynaptic sites during synaptogenesis. The binding to the presynaptic adhesion protein nrx-1 and to the neuroligin nlg-1 at postsynaptic sites promotes clustering of GABAergic receptors at postsynaptic NMJs, thereby contributing to normal GABAergic synaptic transmission. Isoform a and isoform c: Promotes the clustering of acetylcholine receptors (AChR) at excitatory cholinergic synapses of NMJs via the netrin receptor unc-40. Its function is as follows. Acts as a guidance cue in the attraction of muscle membrane extensions (muscle arms) to the dorsal cord and in cooperation with unc-6 to the ventral cord via the netrin receptor unc-40 and via the unc-40 coreceptor eva-1. Together with nrx-1, clusters netrin receptor unc-40 and neuroligin nlg-1 at postsynaptic sites of GABAergic NMJs, thereby promoting the recruitment of GABA(A) receptors at GABAergic synapses. Prevents the recruitment of GABAergic receptors to cholinergic synapses. This Caenorhabditis elegans protein is Protein madd-4.